The following is a 399-amino-acid chain: Beta-1,4-galactosyltransferase 1 (399 aa).

Over 1 to 24 (MRFREQFLGGSAAMPGATLQRACR) the chain is Cytoplasmic. The helical; Signal-anchor for type II membrane protein transmembrane segment at 25-44 (LLVAVCALHLGVTLVYYLSG) threads the bilayer. Over 45-399 (RDLSRLPQLV…QITVDIGTPR (355 aa)) the chain is Lumenal. Positions 61–113 (QGGTNGAAASKQPPGEQRPRGARPPPPLGVSPKPRPGLDSSPGAASGPGLKSN) are disordered. Residues 82-95 (ARPPPPLGVSPKPR) show a composition bias toward pro residues. A glycan (N-linked (GlcNAc...) asparagine) is linked at Asn-113. Residues Cys-131 and Cys-173 are joined by a disulfide bond. UDP-alpha-D-galactose-binding positions include 184–188 (PFRNR), 223–225 (FNR), 250–251 (VD), and Trp-311. Cys-244 and Cys-263 are oxidised to a cystine. Residue Asp-251 coordinates Mn(2+). Residue 313-316 (GEDD) participates in N-acetyl-D-glucosamine binding. Position 344 (His-344) interacts with Mn(2+). Residue 344–346 (HSR) participates in UDP-alpha-D-galactose binding. Arg-356 provides a ligand contact to N-acetyl-D-glucosamine.

The protein belongs to the glycosyltransferase 7 family. As to quaternary structure, homodimer; and heterodimer with alpha-lactalbumin to form lactose synthase. Interacts (via N-terminal cytoplasmic domain) with UBE2Q1 (via N-terminus); the interaction is direct. It depends on Mn(2+) as a cofactor. Post-translationally, the soluble form derives from the membrane forms by proteolytic processing.

Its subcellular location is the golgi apparatus. It is found in the golgi stack membrane. The protein localises to the cell membrane. It localises to the cell surface. The protein resides in the cell projection. Its subcellular location is the filopodium. It is found in the secreted. The catalysed reaction is D-glucose + UDP-alpha-D-galactose = lactose + UDP + H(+). It carries out the reaction an N-acetyl-beta-D-glucosaminyl derivative + UDP-alpha-D-galactose = a beta-D-galactosyl-(1-&gt;4)-N-acetyl-beta-D-glucosaminyl derivative + UDP + H(+). It catalyses the reaction N-acetyl-D-glucosamine + UDP-alpha-D-galactose = beta-D-galactosyl-(1-&gt;4)-N-acetyl-D-glucosamine + UDP + H(+). The enzyme catalyses a beta-D-GlcNAc-(1-&gt;3)-beta-D-Gal-(1-&gt;4)-beta-D-Glc-(1&lt;-&gt;1)-Cer(d18:1(4E)) + UDP-alpha-D-galactose = a neolactoside nLc4Cer(d18:1(4E)) + UDP + H(+). The catalysed reaction is a beta-D-glucosylceramide + UDP-alpha-D-galactose = a beta-D-galactosyl-(1-&gt;4)-beta-D-glucosyl-(1&lt;-&gt;1)-ceramide + UDP + H(+). It carries out the reaction a neolactoside IV(3)-beta-GlcNAc-nLc4Cer + UDP-alpha-D-galactose = a neolactoside nLc6Cer + UDP + H(+). Its pathway is protein modification; protein glycosylation. The Golgi complex form catalyzes the production of lactose in the lactating mammary gland and could also be responsible for the synthesis of complex-type N-linked oligosaccharides in many glycoproteins as well as the carbohydrate moieties of glycolipids. Functionally, the cell surface form functions as a recognition molecule during a variety of cell to cell and cell to matrix interactions, as those occurring during development and egg fertilization, by binding to specific oligosaccharide ligands on opposing cells or in the extracellular matrix. The secreted form is responsible for the synthesis of complex-type to N-linked oligosaccharides in many glycoproteins as well as the carbohydrate moieties of glycolipids. The polypeptide is Beta-1,4-galactosyltransferase 1 (Mus musculus (Mouse)).